A 445-amino-acid chain; its full sequence is Chromosomal replication initiator protein DnaA (445 aa).

Positions 1–73 are domain I, interacts with DnaA modulators; it reads MSTHLTETWE…VNALKLLTSK (73 aa). Residues 73 to 106 form a domain II region; that stretch reads KKYNIDFIVTTEEKIEKNHNNEKSNIVVNDEMST. Residues 107–323 are domain III, AAA+ region; that stretch reads MLNPKYTFDS…GALIRIVAFS (217 aa). Positions 151, 153, 154, and 155 each coordinate ATP. The domain IV, binds dsDNA stretch occupies residues 324–445; that stretch reads SLTNKEISVD…KELNKRINQK (122 aa).

Belongs to the DnaA family. As to quaternary structure, oligomerizes as a right-handed, spiral filament on DNA at oriC.

The protein resides in the cytoplasm. In terms of biological role, plays an essential role in the initiation and regulation of chromosomal replication. ATP-DnaA binds to the origin of replication (oriC) to initiate formation of the DNA replication initiation complex once per cell cycle. Binds the DnaA box (a 9 base pair repeat at the origin) and separates the double-stranded (ds)DNA. Forms a right-handed helical filament on oriC DNA; dsDNA binds to the exterior of the filament while single-stranded (ss)DNA is stabiized in the filament's interior. The ATP-DnaA-oriC complex binds and stabilizes one strand of the AT-rich DNA unwinding element (DUE), permitting loading of DNA polymerase. After initiation quickly degrades to an ADP-DnaA complex that is not apt for DNA replication. Binds acidic phospholipids. In Clostridium botulinum (strain Okra / Type B1), this protein is Chromosomal replication initiator protein DnaA.